We begin with the raw amino-acid sequence, 207 residues long: Redox-sensing transcriptional repressor Rex (207 aa).

The segment at residues 15 to 54 (LYYRCLNRLYEEGIEYVASKDIAERLGIKSSQVRKDLSYF) is a DNA-binding region (H-T-H motif). An NAD(+)-binding site is contributed by 89–94 (GAGNIG).

It belongs to the transcriptional regulatory Rex family. As to quaternary structure, homodimer.

It is found in the cytoplasm. In terms of biological role, modulates transcription in response to changes in cellular NADH/NAD(+) redox state. The protein is Redox-sensing transcriptional repressor Rex of Thermosipho africanus (strain TCF52B).